The sequence spans 453 residues: Prenyltransferase nscD (453 aa).

The dimethylallyl diphosphate site is built by R118, K200, Y202, K271, Y273, and Y428.

This sequence belongs to the tryptophan dimethylallyltransferase family.

Its pathway is secondary metabolite biosynthesis. Its function is as follows. Prenyltransferase; part of the gene cluster that mediates the biosynthesis of neosartoricin, a prenylated anthracenone that exhibits T-cell antiproliferative activity, suggestive of a physiological role as an immunosuppressive agent. The non-reducing polyketide synthase nscA probably synthesizes and cyclizes the decaketide backbone. The hydrolase nscB then mediates the product release through hydrolysis followed by spontaneous decarboxylation. The prenyltransferase nscD catalyzes the addition of the dimethylallyl group to the aromatic C5. The FAD-dependent monooxygenase nscC is then responsible for the stereospecific hydroxylation at C2. There is no gene encoding O-acetyltransferase in the nsc gene cluster; thus, the last step of 2-O-acetylation leading to neosartoricin may be catalyzed by an unidentified O-acetyltransferase. The polypeptide is Prenyltransferase nscD (Aspergillus fumigatus (strain ATCC MYA-4609 / CBS 101355 / FGSC A1100 / Af293) (Neosartorya fumigata)).